Reading from the N-terminus, the 869-residue chain is Aconitate hydratase A (869 aa).

[4Fe-4S] cluster-binding residues include C411, C477, and C480.

Belongs to the aconitase/IPM isomerase family. In terms of assembly, monomer. Requires [4Fe-4S] cluster as cofactor.

The enzyme catalyses citrate = D-threo-isocitrate. The catalysed reaction is (2S,3R)-3-hydroxybutane-1,2,3-tricarboxylate = 2-methyl-cis-aconitate + H2O. Its pathway is carbohydrate metabolism; tricarboxylic acid cycle; isocitrate from oxaloacetate: step 2/2. It functions in the pathway organic acid metabolism; propanoate degradation. In terms of biological role, involved in the catabolism of short chain fatty acids (SCFA) via the tricarboxylic acid (TCA)(acetyl degradation route) and the 2-methylcitrate cycle I (propionate degradation route). Catalyzes the reversible isomerization of citrate to isocitrate via cis-aconitate. Could catalyze the hydration of 2-methyl-cis-aconitate to yield (2S,3R)-2-methylisocitrate. The apo form of AcnA functions as a RNA-binding regulatory protein. In Cupriavidus necator (Alcaligenes eutrophus), this protein is Aconitate hydratase A.